The chain runs to 839 residues: Protein translocase subunit SecA (839 aa).

Residues glutamine 85, 103–107 (GEGKT), and aspartate 493 contribute to the ATP site. The span at 780–790 (QIHEQERERAS) shows a compositional bias: basic and acidic residues. The interval 780–839 (QIHEQERERASQRATTAAPQNIQSQQSANTDDLPKVERNEACPCGSGKKFKNCHGRKSFS) is disordered. Polar residues predominate over residues 791–809 (QRATTAAPQNIQSQQSANT). The Zn(2+) site is built by cysteine 821, cysteine 823, cysteine 832, and histidine 833. A compositionally biased stretch (basic residues) spans 827–839 (KKFKNCHGRKSFS).

This sequence belongs to the SecA family. In terms of assembly, monomer and homodimer. Part of the essential Sec protein translocation apparatus which comprises SecA, SecYEG and auxiliary proteins SecDF. Other proteins may also be involved. It depends on Zn(2+) as a cofactor.

It localises to the cell membrane. The protein resides in the cytoplasm. The catalysed reaction is ATP + H2O + cellular proteinSide 1 = ADP + phosphate + cellular proteinSide 2.. Part of the Sec protein translocase complex. Interacts with the SecYEG preprotein conducting channel. Has a central role in coupling the hydrolysis of ATP to the transfer of proteins into and across the cell membrane, serving as an ATP-driven molecular motor driving the stepwise translocation of polypeptide chains across the membrane. The chain is Protein translocase subunit SecA from Streptococcus pyogenes serotype M3 (strain ATCC BAA-595 / MGAS315).